The chain runs to 154 residues: Large-conductance mechanosensitive channel (154 aa).

2 consecutive transmembrane segments (helical) span residues 14 to 34 (VVDL…VNSL) and 86 to 106 (VFIN…FFVV).

It belongs to the MscL family. As to quaternary structure, homopentamer.

The protein resides in the cell membrane. Functionally, channel that opens in response to stretch forces in the membrane lipid bilayer. May participate in the regulation of osmotic pressure changes within the cell. This Dehalococcoides mccartyi (strain CBDB1) protein is Large-conductance mechanosensitive channel.